The sequence spans 237 residues: (5-formylfuran-3-yl)methyl phosphate synthase (237 aa).

Lysine 29 (schiff-base intermediate with substrate) is an active-site residue. Residue lysine 87 is the Proton acceptor of the active site.

It belongs to the MfnB family.

It catalyses the reaction 2 D-glyceraldehyde 3-phosphate = 4-(hydroxymethyl)-2-furancarboxaldehyde phosphate + phosphate + 2 H2O. Its pathway is cofactor biosynthesis; methanofuran biosynthesis. Its function is as follows. Catalyzes the formation of 4-(hydroxymethyl)-2-furancarboxaldehyde phosphate (4-HFC-P) from two molecules of glyceraldehyde-3-P (GA-3-P). This is (5-formylfuran-3-yl)methyl phosphate synthase from Methanopyrus kandleri (strain AV19 / DSM 6324 / JCM 9639 / NBRC 100938).